The sequence spans 495 residues: UDP-N-acetylmuramate--L-alanine ligase (495 aa).

120–126 (GSHGKTT) provides a ligand contact to ATP.

This sequence belongs to the MurCDEF family.

It localises to the cytoplasm. It catalyses the reaction UDP-N-acetyl-alpha-D-muramate + L-alanine + ATP = UDP-N-acetyl-alpha-D-muramoyl-L-alanine + ADP + phosphate + H(+). It functions in the pathway cell wall biogenesis; peptidoglycan biosynthesis. Cell wall formation. The protein is UDP-N-acetylmuramate--L-alanine ligase of Rickettsia prowazekii (strain Madrid E).